A 376-amino-acid chain; its full sequence is Major capsid protein (376 aa).

It localises to the virion. Assembles to form an icosahedral capsid. The protein is Major capsid protein of Pseudomonas aeruginosa (Bacteriophage KPP25).